Consider the following 896-residue polypeptide: Myelin regulatory factor-like protein (896 aa).

The NDT80 DNA-binding region spans 111 to 403 (GLPHRTFHNC…SNPGQFENDI (293 aa)). Positions 449-557 (SDSRAKQNVQ…KLTNNLEERI (109 aa)) constitute a Peptidase S74 domain. The stretch at 541 to 573 (GAVKQLCKLTNNLEERIEELEIWNRKLARLKRL) forms a coiled coil. Residues 622–638 (VFQSLVITLIAVMAFCL) traverse the membrane as a helical segment. A compositionally biased stretch (polar residues) spans 648 to 658 (APSSNLTSSQE). The interval 648-672 (APSSNLTSSQEPALPSTASPSAPNT) is disordered. Residues 659-672 (PALPSTASPSAPNT) show a composition bias toward low complexity.

It belongs to the MRF family.

The protein localises to the membrane. The protein is Myelin regulatory factor-like protein (MYRFL) of Bos taurus (Bovine).